The sequence spans 67 residues: Bowman-Birk type proteinase inhibitor A4 (67 aa).

4 cysteine pairs are disulfide-bonded: Cys10–Cys29, Cys16–Cys27, Cys36–Cys43, and Cys40–Cys57.

The protein belongs to the Bowman-Birk serine protease inhibitor family. In terms of tissue distribution, expressed in bulb (at protein level).

Serine protease inhibitor. Inhibits trypsin (Ki=12nM) and weakly inhibits chymotrypsin with (Ki=460nm). Does not inhibit bacterial subtilisin. The protein is Bowman-Birk type proteinase inhibitor A4 of Hyacinthus orientalis (Common hyacinth).